Consider the following 216-residue polypeptide: Cytidylate kinase (216 aa).

Position 7 to 15 (7 to 15 (GPAGTGKST)) interacts with ATP.

Belongs to the cytidylate kinase family. Type 1 subfamily.

It is found in the cytoplasm. The enzyme catalyses CMP + ATP = CDP + ADP. It carries out the reaction dCMP + ATP = dCDP + ADP. The chain is Cytidylate kinase from Chlamydia muridarum (strain MoPn / Nigg).